A 617-amino-acid chain; its full sequence is 5-hydroxytryptamine receptor 2B (617 aa).

Over 1–95 (MLKTVTTAMA…LLVKMIAMAV (95 aa)) the chain is Extracellular. 4 N-linked (GlcNAc...) asparagine glycosylation sites follow: Asn31, Asn41, Asn51, and Asn58. Residues 96–116 (VLGLMILVTIIGNVFVIAAII) traverse the membrane as a helical segment. Topologically, residues 117–128 (LERNLQNVANYL) are cytoplasmic. A helical transmembrane segment spans residues 129–149 (VASLAVADLFVACLVMPLGAV). At 150–164 (YEISNGWILGPELCD) the chain is on the extracellular side. An intrachain disulfide couples Cys163 to Cys242. The chain crosses the membrane as a helical span at residues 165-185 (IWTSCDVLCCTASILHLVAIA). Residues 186-205 (ADRYWTVTNIDYNNLRTPRR) lie on the Cytoplasmic side of the membrane. Residues 206-226 (VFLMIFCVWFAALIVSLAPQF) form a helical membrane-spanning segment. Residues 227–256 (GWKDPDYMKRIEEQHCMVSQDVGYQIFATC) are Extracellular-facing. Residues 257 to 277 (CTFYVPLLVILFLYWKIYIIA) form a helical membrane-spanning segment. At 278–534 (RKRIQRRAQK…EAKRERKAAQ (257 aa)) the chain is on the cytoplasmic side. The tract at residues 309-336 (RSKRRAERKRLEAGERTPVDGDGTGGQL) is disordered. Residues 317-327 (KRLEAGERTPV) show a composition bias toward basic and acidic residues. A helical membrane pass occupies residues 535–555 (TLAIITGAFVICWLPFFVMAL). Residues 556–570 (TMSLCKECEIHTAVA) are Extracellular-facing. The chain crosses the membrane as a helical span at residues 571 to 591 (SLFLWLGYFNSTLNPVIYTIF). The Cytoplasmic segment spans residues 592-617 (NPEFRRAFKRILFGRKAAARARSAKI).

It belongs to the G-protein coupled receptor 1 family.

Its subcellular location is the cell membrane. Its function is as follows. This is one of the several different receptors for 5-hydroxytryptamine (serotonin), a biogenic hormone that functions as a neurotransmitter, a hormone, and a mitogen. The activity of this receptor is mediated by G proteins which inhibit adenylate cyclase. This is 5-hydroxytryptamine receptor 2B (5-HT1B) from Drosophila melanogaster (Fruit fly).